The sequence spans 503 residues: MVLLGLLQSGGWVLGQAMEQVTGGNLLSTLLIACAFTLSLVYLFRLAVGHMVQLPAGAKSPPHIYSPIPFLGHAIAFGKSPIEFLENAYEKYGPVFSFTMVGKTFTYLLGSDAAALLFNSKNEDLNAEEVYGRLTTPVFGKGVAYDVPNAIFLEQKKIIKSGLNIAHFKQYVPIIEKEAKEYFQSWGESGERNVFEALSELIILTASHCLHGKEIRSQLNEKVAQLYADLDGGFTHAAWLLPAWLPLPSFRRRDRAHREIKNIFYKAIQKRRLSKEPAEDILQTLLDSTYKDGRPLTDEEISGMLIGLLLAGQHTSSTTSAWMGFFLAKDKPLQEKCYLEQKAVCGEDLPPLTYDQLKDLNLLDRCIKETLRLRPPIMTMMRMAKTPQTVAGYTIPPGHQVCVSPTVNQRLKDSWAERLDFNPDRYLQDNPASGEKFAYVPFGAGRHRCVGENFAYVQIKTIWSTMLRLYEFDLINGYFPTVNYTTMIHTPENPVIRYKRRSK.

Residues 24–44 (GNLLSTLLIACAFTLSLVYLF) traverse the membrane as a helical segment. Cys-449 is a heme binding site.

The protein belongs to the cytochrome P450 family. Heme serves as cofactor. Ubiquitinated by MARCHF6, leading to proteasomal degradation.

The protein localises to the endoplasmic reticulum membrane. Its subcellular location is the microsome membrane. It catalyses the reaction a 14alpha-methyl steroid + 3 reduced [NADPH--hemoprotein reductase] + 3 O2 = a Delta(14) steroid + formate + 3 oxidized [NADPH--hemoprotein reductase] + 4 H2O + 4 H(+). The enzyme catalyses lanosterol + 3 reduced [NADPH--hemoprotein reductase] + 3 O2 = 4,4-dimethyl-5alpha-cholesta-8,14,24-trien-3beta-ol + formate + 3 oxidized [NADPH--hemoprotein reductase] + 4 H2O + 4 H(+). The catalysed reaction is 24,25-dihydrolanosterol + 3 reduced [NADPH--hemoprotein reductase] + 3 O2 = 4,4-dimethyl-8,14-cholestadien-3beta-ol + formate + 3 oxidized [NADPH--hemoprotein reductase] + 4 H2O + 4 H(+). It carries out the reaction a 14alpha-methyl steroid + reduced [NADPH--hemoprotein reductase] + O2 = a 14alpha-hydroxymethyl steroid + oxidized [NADPH--hemoprotein reductase] + H2O + H(+). It catalyses the reaction a 14alpha-hydroxymethyl steroid + reduced [NADPH--hemoprotein reductase] + O2 = a 14alpha-formyl steroid + oxidized [NADPH--hemoprotein reductase] + 2 H2O + H(+). The enzyme catalyses a 14alpha-formyl steroid + reduced [NADPH--hemoprotein reductase] + O2 = a Delta(14) steroid + formate + oxidized [NADPH--hemoprotein reductase] + H2O + 2 H(+). The catalysed reaction is lanosterol + reduced [NADPH--hemoprotein reductase] + O2 = 32-hydroxylanosterol + oxidized [NADPH--hemoprotein reductase] + H2O + H(+). It carries out the reaction 32-hydroxylanosterol + reduced [NADPH--hemoprotein reductase] + O2 = 32-oxolanosterol + oxidized [NADPH--hemoprotein reductase] + 2 H2O + H(+). It catalyses the reaction 32-oxolanosterol + reduced [NADPH--hemoprotein reductase] + O2 = 4,4-dimethyl-5alpha-cholesta-8,14,24-trien-3beta-ol + formate + oxidized [NADPH--hemoprotein reductase] + H2O + 2 H(+). The enzyme catalyses 24,25-dihydrolanosterol + reduced [NADPH--hemoprotein reductase] + O2 = 32-hydroxy-24,25-dihydrolanosterol + oxidized [NADPH--hemoprotein reductase] + H2O + H(+). The catalysed reaction is 32-hydroxy-24,25-dihydrolanosterol + reduced [NADPH--hemoprotein reductase] + O2 = 32-oxo-24,25-dihydrolanosterol + oxidized [NADPH--hemoprotein reductase] + 2 H2O + H(+). It carries out the reaction 32-oxo-24,25-dihydrolanosterol + reduced [NADPH--hemoprotein reductase] + O2 = 4,4-dimethyl-8,14-cholestadien-3beta-ol + formate + oxidized [NADPH--hemoprotein reductase] + H2O + 2 H(+). It participates in steroid biosynthesis; zymosterol biosynthesis; zymosterol from lanosterol: step 1/6. With respect to regulation, inhibited by azalanstat. Inhibited by azole antifungal agents ketoconazole, itraconazole and fluconazole. In terms of biological role, sterol 14alpha-demethylase that plays a critical role in the cholesterol biosynthesis pathway, being cholesterol the major sterol component in mammalian membranes as well as a precursor for bile acid and steroid hormone synthesis. Cytochrome P450 monooxygenase that catalyzes the three-step oxidative removal of the 14alpha-methyl group (C-32) of sterols such as lanosterol (lanosta-8,24-dien-3beta-ol) and 24,25-dihydrolanosterol (DHL) in the form of formate, and converts the sterols to 4,4-dimethyl-5alpha-cholesta-8,14,24-trien-3beta-ol and 4,4-dimethyl-8,14-cholestadien-3beta-ol, respectively, which are intermediates of cholesterol biosynthesis. Can also demethylate substrates not intrinsic to mammals, such as eburicol (24-methylene-24,25-dihydrolanosterol), but at a lower rate than DHL. The polypeptide is Lanosterol 14-alpha demethylase (Mus musculus (Mouse)).